The primary structure comprises 487 residues: Vacuolar protein sorting-associated protein 30 (487 aa).

The segment at 33–129 is disordered; sequence PQTLKKSSVP…DNPDAPMGSE (97 aa). The segment covering 52 to 62 has biased composition (basic and acidic residues); it reads QSRKSIYDRVS. Over residues 81-94 the composition is skewed to polar residues; sequence SSMSFVLLSESQMA. The stretch at 152–282 forms a coiled coil; that stretch reads VECTEMLVEG…DSQLLEKLQR (131 aa). Positions 283 to 480 are BARA; it reads SNVYNDTFCI…LAHASNVTSN (198 aa). A required for membrane-association, autophagic function during starvation and normal autophagosome morphology region spans residues 456–481; that stretch reads WTKACKLTLTCCKFLLAHASNVTSNA.

The protein belongs to the beclin family. As to quaternary structure, component of the autophagy-specific VPS34 PI3-kinase complex I; and of the VPS34 PI3-kinase complex II.

The protein resides in the endosome membrane. Its subcellular location is the vacuole membrane. The protein localises to the preautophagosomal structure membrane. Its function is as follows. Required for cytoplasm to vacuole transport (Cvt), autophagy, nucleophagy, and mitophagy, as a part of the autophagy-specific VPS34 PI3-kinase complex I. This complex is essential to recruit the ATG8-phosphatidylinositol conjugate and the ATG12-ATG5 conjugate to the pre-autophagosomal structure. Also involved in endosome-to-Golgi retrograde transport as part of the VPS34 PI3-kinase complex II. Autophagy is required for proper vegetative growth, asexual/sexual reproduction, and full virulence. Autophagy is particularly involved in the biosynthesis of deoxynivalenol (DON), an important virulence determinant. This is Vacuolar protein sorting-associated protein 30 from Gibberella zeae (strain ATCC MYA-4620 / CBS 123657 / FGSC 9075 / NRRL 31084 / PH-1) (Wheat head blight fungus).